The sequence spans 397 residues: 1-deoxy-D-xylulose 5-phosphate reductoisomerase (397 aa).

NADPH contacts are provided by threonine 10, glycine 11, serine 12, isoleucine 13, glycine 36, asparagine 38, and asparagine 128. 1-deoxy-D-xylulose 5-phosphate is bound at residue lysine 129. An NADPH-binding site is contributed by glutamate 130. Aspartate 154 contributes to the Mn(2+) binding site. 1-deoxy-D-xylulose 5-phosphate contacts are provided by serine 155, glutamate 156, serine 180, and histidine 203. Mn(2+) is bound at residue glutamate 156. Residue glycine 209 participates in NADPH binding. 3 residues coordinate 1-deoxy-D-xylulose 5-phosphate: asparagine 221, lysine 222, and glutamate 225. Residue glutamate 225 participates in Mn(2+) binding.

It belongs to the DXR family. Mg(2+) is required as a cofactor. It depends on Mn(2+) as a cofactor.

It catalyses the reaction 2-C-methyl-D-erythritol 4-phosphate + NADP(+) = 1-deoxy-D-xylulose 5-phosphate + NADPH + H(+). It functions in the pathway isoprenoid biosynthesis; isopentenyl diphosphate biosynthesis via DXP pathway; isopentenyl diphosphate from 1-deoxy-D-xylulose 5-phosphate: step 1/6. Functionally, catalyzes the NADPH-dependent rearrangement and reduction of 1-deoxy-D-xylulose-5-phosphate (DXP) to 2-C-methyl-D-erythritol 4-phosphate (MEP). The polypeptide is 1-deoxy-D-xylulose 5-phosphate reductoisomerase (Solibacter usitatus (strain Ellin6076)).